Here is a 219-residue protein sequence, read N- to C-terminus: MEKAEAAAVVIPLSVSNPSYRGSGMSDQEVSEEQSAGDAWVSAAMAAAEAVAAAATSTGIDNTNDYTYTAASENGDPGFTLGDNTYGPNGAASGCPSPPSPEVVGLEMVVVSSLAPEIAAAVPADTIFASAAAPATRVDDGNAPLLGPGQAQDYDSESGCYYSESDNETASMFIRRVGRRQARRHRRRRVALTVAGVILVVVLCAISGIVGAFLARVFP.

At 1 to 193 the chain is on the intravirion side; the sequence is MEKAEAAAVV…RHRRRRVALT (193 aa). Residues 145 to 146 carry the Di-leucine internalization motif motif; the sequence is LL. An acidic region spans residues 153–168; that stretch reads DYDSESGCYYSESDNE. Phosphoserine; by host CK2 is present on residues serine 163 and serine 165. Residues 194 to 214 form a helical; Signal-anchor for type II membrane protein membrane-spanning segment; that stretch reads VAGVILVVVLCAISGIVGAFL. Residues 215–219 lie on the Virion surface side of the membrane; it reads ARVFP.

Belongs to the alphaherpesvirinae envelope protein US9 family. Post-translationally, phosphorylated on serines within the acidic cluster. Phosphorylation determines whether endocytosed viral US9 traffics to the trans-Golgi network or recycles to the cell membrane.

It localises to the virion membrane. The protein resides in the host Golgi apparatus membrane. The protein localises to the host smooth endoplasmic reticulum membrane. It is found in the host cell membrane. In terms of biological role, essential for the anterograde spread of the infection throughout the host nervous system. Together with the gE/gI heterodimer, US9 is involved in the sorting and transport of viral structural components toward axon tips. The protein is Envelope protein US9 homolog of Equine herpesvirus 1 (strain Ab4p) (EHV-1).